A 235-amino-acid chain; its full sequence is Large ribosomal subunit protein uL2 (235 aa).

The interval 197-218 (VAMNPVDHPHGGGEGKTSGGRH) is disordered.

The protein belongs to the universal ribosomal protein uL2 family. Part of the 50S ribosomal subunit. Forms a bridge to the 30S subunit in the 70S ribosome.

In terms of biological role, one of the primary rRNA binding proteins. Required for association of the 30S and 50S subunits to form the 70S ribosome, for tRNA binding and peptide bond formation. It has been suggested to have peptidyltransferase activity; this is somewhat controversial. Makes several contacts with the 16S rRNA in the 70S ribosome. The chain is Large ribosomal subunit protein uL2 (rplB) from Carsonella ruddii (strain PV).